The primary structure comprises 117 residues: Prefoldin subunit beta (117 aa).

The protein belongs to the prefoldin subunit beta family. Heterohexamer of two alpha and four beta subunits.

The protein localises to the cytoplasm. In terms of biological role, molecular chaperone capable of stabilizing a range of proteins. Seems to fulfill an ATP-independent, HSP70-like function in archaeal de novo protein folding. In Thermococcus gammatolerans (strain DSM 15229 / JCM 11827 / EJ3), this protein is Prefoldin subunit beta.